The primary structure comprises 451 residues: Probable phosphoglucosamine mutase (451 aa).

Catalysis depends on S96, which acts as the Phosphoserine intermediate. Mg(2+) is bound by residues S96, D233, D235, and D237. S96 is subject to Phosphoserine.

It belongs to the phosphohexose mutase family. It depends on Mg(2+) as a cofactor. Post-translationally, activated by phosphorylation.

It catalyses the reaction alpha-D-glucosamine 1-phosphate = D-glucosamine 6-phosphate. Its function is as follows. Catalyzes the conversion of glucosamine-6-phosphate to glucosamine-1-phosphate. In Pyrococcus abyssi (strain GE5 / Orsay), this protein is Probable phosphoglucosamine mutase.